The sequence spans 234 residues: Adenosine 5'-phosphosulfate reductase (234 aa).

Residues Cys-120, Cys-121, Cys-203, and Cys-206 each contribute to the [4Fe-4S] cluster site. Catalysis depends on Cys-229, which acts as the Nucleophile; cysteine thiosulfonate intermediate.

The protein belongs to the PAPS reductase family. CysH subfamily. [4Fe-4S] cluster is required as a cofactor.

Its subcellular location is the cytoplasm. The catalysed reaction is [thioredoxin]-disulfide + sulfite + AMP + 2 H(+) = adenosine 5'-phosphosulfate + [thioredoxin]-dithiol. Its pathway is sulfur metabolism; hydrogen sulfide biosynthesis; sulfite from sulfate. In terms of biological role, catalyzes the formation of sulfite from adenosine 5'-phosphosulfate (APS) using thioredoxin as an electron donor. This chain is Adenosine 5'-phosphosulfate reductase, found in Bacillus cereus (strain ATCC 14579 / DSM 31 / CCUG 7414 / JCM 2152 / NBRC 15305 / NCIMB 9373 / NCTC 2599 / NRRL B-3711).